The primary structure comprises 201 residues: tRNA (guanine-N(7)-)-methyltransferase (201 aa).

The S-adenosyl-L-methionine site is built by Glu34, Glu59, Asp86, and Asp107. The active site involves Asp107. Residues Lys111, Asp143, and 181-184 contribute to the substrate site; that span reads TDYE.

The protein belongs to the class I-like SAM-binding methyltransferase superfamily. TrmB family.

The enzyme catalyses guanosine(46) in tRNA + S-adenosyl-L-methionine = N(7)-methylguanosine(46) in tRNA + S-adenosyl-L-homocysteine. The protein operates within tRNA modification; N(7)-methylguanine-tRNA biosynthesis. Catalyzes the formation of N(7)-methylguanine at position 46 (m7G46) in tRNA. This Mycoplasma mobile (strain ATCC 43663 / 163K / NCTC 11711) (Mesomycoplasma mobile) protein is tRNA (guanine-N(7)-)-methyltransferase.